The primary structure comprises 108 residues: MGVHRITSEAAKYYAQREKVVGAGVSLLGEASMNLDKLSKEQLEKLGDLAAKLLPHSPGYAGKMMPIVARLFWRLAGVGEKEFGFAELDELEKEIERLKEELGFNSQQ.

This is an uncharacterized protein from Archaeoglobus fulgidus (strain ATCC 49558 / DSM 4304 / JCM 9628 / NBRC 100126 / VC-16).